The following is a 311-amino-acid chain: Bifunctional protein FolD (311 aa).

Residue 174–176 (GKG) participates in NADP(+) binding.

It belongs to the tetrahydrofolate dehydrogenase/cyclohydrolase family. In terms of assembly, homodimer.

It carries out the reaction (6R)-5,10-methylene-5,6,7,8-tetrahydrofolate + NADP(+) = (6R)-5,10-methenyltetrahydrofolate + NADPH. The enzyme catalyses (6R)-5,10-methenyltetrahydrofolate + H2O = (6R)-10-formyltetrahydrofolate + H(+). It participates in one-carbon metabolism; tetrahydrofolate interconversion. Functionally, catalyzes the oxidation of 5,10-methylenetetrahydrofolate to 5,10-methenyltetrahydrofolate and then the hydrolysis of 5,10-methenyltetrahydrofolate to 10-formyltetrahydrofolate. The polypeptide is Bifunctional protein FolD (Pyrobaculum aerophilum (strain ATCC 51768 / DSM 7523 / JCM 9630 / CIP 104966 / NBRC 100827 / IM2)).